Consider the following 486-residue polypeptide: MNAPESVQAKPRKRYDAGVMKYKEMGYWDGDYEPKDTDLLALFRITPQDGVDPVEAAAAVAGESSTATWTVVWTDRLTACDMYRAKAYRVDPVPNNPEQFFCYVAYDLSLFEEGSIANLTASIIGNVFSFKPIKAARLEDMRFPVAYVKTFAGPSTGIIVERERLDKFGRPLLGATTKPKLGLSGRNYGRVVYEGLKGGLDFMKDDENINSQPFMHWRDRFLFVMDAVNKASAATGEVKGSYLNVTAGTMEEMYRRAEFAKSLGSVIIMIDLIVGWTCIQSMSNWCRQNDMILHLHRAGHGTYTRQKNHGVSFRVIAKWLRLAGVDHMHTGTAVGKLEGDPLTVQGYYNVCRDAYTHADLSRGLFFDQDWASLRKVMPVASGGIHAGQMHQLISLFGDDVVLQFGGGTIGHPQGIQAGATANRVALEAMVLARNEGRDILNEGPEILRDAARWCGPLRAALDTWGDISFNYTPTDTSDFAPTASVA.

Residues asparagine 126 and threonine 176 each coordinate substrate. Lysine 178 functions as the Proton acceptor in the catalytic mechanism. Position 180 (lysine 180) interacts with substrate. 3 residues coordinate Mg(2+): lysine 204, aspartate 206, and glutamate 207. Lysine 204 bears the N6-carboxylysine mark. Residue histidine 296 is the Proton acceptor of the active site. Residues arginine 297, histidine 329, and serine 381 each contribute to the substrate site.

The protein belongs to the RuBisCO large chain family. Type I subfamily. Heterohexadecamer of 8 large chains and 8 small chains; disulfide-linked. The disulfide link is formed within the large subunit homodimers. It depends on Mg(2+) as a cofactor. The disulfide bond which can form between Cys-278 in the large chain dimeric partners within the hexadecamer appears to be associated with oxidative stress and protein turnover.

It catalyses the reaction 2 (2R)-3-phosphoglycerate + 2 H(+) = D-ribulose 1,5-bisphosphate + CO2 + H2O. The enzyme catalyses D-ribulose 1,5-bisphosphate + O2 = 2-phosphoglycolate + (2R)-3-phosphoglycerate + 2 H(+). Its function is as follows. RuBisCO catalyzes two reactions: the carboxylation of D-ribulose 1,5-bisphosphate, the primary event in carbon dioxide fixation, as well as the oxidative fragmentation of the pentose substrate. Both reactions occur simultaneously and in competition at the same active site. In Cupriavidus necator (strain ATCC 17699 / DSM 428 / KCTC 22496 / NCIMB 10442 / H16 / Stanier 337) (Ralstonia eutropha), this protein is Ribulose bisphosphate carboxylase large chain, chromosomal (cbbL1).